Here is a 244-residue protein sequence, read N- to C-terminus: NAD-dependent protein deacetylase (244 aa).

The Deacetylase sirtuin-type domain occupies 1-244; it reads MDDKINKLKE…IGKVLGKVID (244 aa). Residues A24, T28, F35, R36, Q105, I107, D108, and H123 each contribute to the NAD(+) site. F35 lines the nicotinamide pocket. The nicotinamide site is built by I107 and D108. The active-site Proton acceptor is the H123. 4 residues coordinate Zn(2+): C131, C134, C152, and C155. Residues T193, S194, N217, and I235 each contribute to the NAD(+) site.

The protein belongs to the sirtuin family. Class U subfamily. The cofactor is Zn(2+).

The protein resides in the cytoplasm. The enzyme catalyses N(6)-acetyl-L-lysyl-[protein] + NAD(+) + H2O = 2''-O-acetyl-ADP-D-ribose + nicotinamide + L-lysyl-[protein]. NAD-dependent protein deacetylase which modulates the activities of several enzymes which are inactive in their acetylated form. The chain is NAD-dependent protein deacetylase from Clostridium perfringens (strain 13 / Type A).